The chain runs to 701 residues: Elongation factor G (701 aa).

The tr-type G domain maps to 11-287; that stretch reads TKVRNIGIMA…AVIDYLPSPL (277 aa). GTP contacts are provided by residues 20–27, 84–88, and 138–141; these read AHIDAGKT, DTPGH, and NKMD.

Belongs to the TRAFAC class translation factor GTPase superfamily. Classic translation factor GTPase family. EF-G/EF-2 subfamily.

The protein localises to the cytoplasm. In terms of biological role, catalyzes the GTP-dependent ribosomal translocation step during translation elongation. During this step, the ribosome changes from the pre-translocational (PRE) to the post-translocational (POST) state as the newly formed A-site-bound peptidyl-tRNA and P-site-bound deacylated tRNA move to the P and E sites, respectively. Catalyzes the coordinated movement of the two tRNA molecules, the mRNA and conformational changes in the ribosome. The protein is Elongation factor G of Mycobacterium leprae (strain Br4923).